The primary structure comprises 1023 residues: Sodium/potassium-transporting ATPase subunit alpha-1 (1023 aa).

The propeptide occupies 1–5 (MGLGK). Positions 1–11 (MGLGKGKDEYK) are enriched in basic and acidic residues. The tract at residues 1–33 (MGLGKGKDEYKLAATSEDGGKKDKKAKAKKDMD) is disordered. Topologically, residues 6–87 (GKDEYKLAAT…NALTPPPTTP (82 aa)) are cytoplasmic. Serine 16 is modified (phosphoserine; by PKC). The tract at residues 82–84 (PPP) is interaction with phosphoinositide-3 kinase. A helical transmembrane segment spans residues 88 to 108 (EWVKFCKQLFGGFSMLLWIGA). Over 109–131 (ILCFLAYGIQAASEDEPANDNLY) the chain is Extracellular. Residues 132–152 (LGIVLSAVVIITGCFSYYQEA) traverse the membrane as a helical segment. Over 153-288 (KSSKIMESFK…GGKTPIAIEI (136 aa)) the chain is Cytoplasmic. Residues 216–237 (SSLTGESEPQTRSPDFSNENPL) form a disordered region. Residues 289–308 (EHFIHIITGVAVFLGVSFFI) traverse the membrane as a helical segment. Topologically, residues 309-320 (LSLILGYNWLEA) are extracellular. Residues 321–338 (VIFLIGIIVANVPEGLLA) form a helical membrane-spanning segment. Residues 339–772 (TVTVCLTLTA…EEGRLIFDNL (434 aa)) are Cytoplasmic-facing. Residue aspartate 376 is the 4-aspartylphosphate intermediate of the active site. An ATP-binding site is contributed by lysine 487. Mg(2+) contacts are provided by aspartate 717 and aspartate 721. A helical transmembrane segment spans residues 773 to 792 (KKSIAYTLTSNIPEISPFLL). Over 793–802 (FIIANIPLPL) the chain is Extracellular. Residues 803–823 (GTVTILCIDLGTDMVPAISLA) traverse the membrane as a helical segment. Topologically, residues 824-843 (YEKAESDIMKRQPRNPKTDK) are cytoplasmic. The chain crosses the membrane as a helical span at residues 844 to 866 (LVNERLISIAYGQIGMMQATAGF). Residues 867 to 918 (FTYFVILAENGFLPMDLIGVRVLWDDKYVNDLEDSYGQQWTYERRKIVEYSC) are Extracellular-facing. The chain crosses the membrane as a helical span at residues 919 to 938 (HTAFFASIVIVQWADLIICK). The Cytoplasmic portion of the chain corresponds to 939–951 (TRRNSIVQQGMTN). Residue serine 943 is modified to Phosphoserine; by PKA. Residues 952–970 (RILIFGLFEETALAAFLSY) form a helical membrane-spanning segment. Residues 971 to 985 (CPGMDVALRMYPMKP) lie on the Extracellular side of the membrane. The chain crosses the membrane as a helical span at residues 986-1006 (LWWFCAFPYSLLIFLYDEARR). The Cytoplasmic segment spans residues 1007–1023 (YILRRNPGGWVEKETYY).

The protein belongs to the cation transport ATPase (P-type) (TC 3.A.3) family. Type IIC subfamily. The sodium/potassium-transporting ATPase is composed of a catalytic alpha subunit, an auxiliary non-catalytic beta subunit and an additional regulatory subunit.

It is found in the cell membrane. Its subcellular location is the sarcolemma. It carries out the reaction K(+)(out) + Na(+)(in) + ATP + H2O = K(+)(in) + Na(+)(out) + ADP + phosphate + H(+). In terms of biological role, this is the catalytic component of the active enzyme, which catalyzes the hydrolysis of ATP coupled with the exchange of sodium and potassium ions across the plasma membrane. This action creates the electrochemical gradient of sodium and potassium ions, providing the energy for active transport of various nutrients. The protein is Sodium/potassium-transporting ATPase subunit alpha-1 (atp1a1) of Oreochromis mossambicus (Mozambique tilapia).